Reading from the N-terminus, the 241-residue chain is ATP synthase subunit a (241 aa).

Helical transmembrane passes span 21-41 (LASI…AIAC), 84-104 (VTLI…AIVI), 116-136 (DATV…YYGI), 183-203 (ILIG…WIIG), and 207-227 (LIAW…IFIM).

The protein belongs to the ATPase A chain family. F-type ATPases have 2 components, CF(1) - the catalytic core - and CF(0) - the membrane proton channel. CF(1) has five subunits: alpha(3), beta(3), gamma(1), delta(1), epsilon(1). CF(0) has three main subunits: a(1), b(2) and c(9-12). The alpha and beta chains form an alternating ring which encloses part of the gamma chain. CF(1) is attached to CF(0) by a central stalk formed by the gamma and epsilon chains, while a peripheral stalk is formed by the delta and b chains.

The protein resides in the cell membrane. In terms of biological role, key component of the proton channel; it plays a direct role in the translocation of protons across the membrane. This chain is ATP synthase subunit a, found in Staphylococcus carnosus (strain TM300).